A 238-amino-acid chain; its full sequence is UDP-2,3-diacylglucosamine hydrolase (238 aa).

Positions 8, 10, 41, 78, and 113 each coordinate Mn(2+). 78–79 (NR) contacts substrate. Residues Asp-121, Ser-159, Asn-163, Lys-166, and His-194 each contribute to the substrate site. Mn(2+)-binding residues include His-194 and His-196.

The protein belongs to the LpxH family. Requires Mn(2+) as cofactor.

It is found in the cell inner membrane. It carries out the reaction UDP-2-N,3-O-bis[(3R)-3-hydroxytetradecanoyl]-alpha-D-glucosamine + H2O = 2-N,3-O-bis[(3R)-3-hydroxytetradecanoyl]-alpha-D-glucosaminyl 1-phosphate + UMP + 2 H(+). It participates in glycolipid biosynthesis; lipid IV(A) biosynthesis; lipid IV(A) from (3R)-3-hydroxytetradecanoyl-[acyl-carrier-protein] and UDP-N-acetyl-alpha-D-glucosamine: step 4/6. Hydrolyzes the pyrophosphate bond of UDP-2,3-diacylglucosamine to yield 2,3-diacylglucosamine 1-phosphate (lipid X) and UMP by catalyzing the attack of water at the alpha-P atom. Involved in the biosynthesis of lipid A, a phosphorylated glycolipid that anchors the lipopolysaccharide to the outer membrane of the cell. The protein is UDP-2,3-diacylglucosamine hydrolase of Shewanella piezotolerans (strain WP3 / JCM 13877).